The primary structure comprises 66 residues: DNA gyrase inhibitor YacG (66 aa).

Zn(2+) contacts are provided by Cys10, Cys13, Cys29, and Cys33. A disordered region spans residues 46–66; that stretch reads KRIPSDVQITDSDEWSDETRY. Residues 56 to 66 show a composition bias toward acidic residues; the sequence is DSDEWSDETRY.

Belongs to the DNA gyrase inhibitor YacG family. In terms of assembly, interacts with GyrB. The cofactor is Zn(2+).

In terms of biological role, inhibits all the catalytic activities of DNA gyrase by preventing its interaction with DNA. Acts by binding directly to the C-terminal domain of GyrB, which probably disrupts DNA binding by the gyrase. The sequence is that of DNA gyrase inhibitor YacG from Sodalis glossinidius (strain morsitans).